Consider the following 381-residue polypeptide: Peptidoglycan glycosyltransferase MrdB (381 aa).

Helical transmembrane passes span 11–31 (FDLL…LLIF), 40–60 (KQGV…FIPF), 66–86 (WLFV…FMGY), 99–119 (FISI…LLLA), 132–152 (YDWG…ALIL), 156–176 (DLGT…IVGL), 180–200 (VWLP…HFLH), 263–283 (FGFL…LHLF), 297–317 (IVAL…IAMT), and 328–348 (LPLF…FGIL).

It belongs to the SEDS family. MrdB/RodA subfamily.

Its subcellular location is the cell inner membrane. It catalyses the reaction [GlcNAc-(1-&gt;4)-Mur2Ac(oyl-L-Ala-gamma-D-Glu-L-Lys-D-Ala-D-Ala)](n)-di-trans,octa-cis-undecaprenyl diphosphate + beta-D-GlcNAc-(1-&gt;4)-Mur2Ac(oyl-L-Ala-gamma-D-Glu-L-Lys-D-Ala-D-Ala)-di-trans,octa-cis-undecaprenyl diphosphate = [GlcNAc-(1-&gt;4)-Mur2Ac(oyl-L-Ala-gamma-D-Glu-L-Lys-D-Ala-D-Ala)](n+1)-di-trans,octa-cis-undecaprenyl diphosphate + di-trans,octa-cis-undecaprenyl diphosphate + H(+). Its pathway is cell wall biogenesis; peptidoglycan biosynthesis. Functionally, peptidoglycan polymerase that is essential for cell wall elongation. This Helicobacter pylori (strain ATCC 700392 / 26695) (Campylobacter pylori) protein is Peptidoglycan glycosyltransferase MrdB.